Here is a 260-residue protein sequence, read N- to C-terminus: Putative methylesterase 19 (260 aa).

Catalysis depends on Ser-81, which acts as the Acyl-ester intermediate. Residues Asp-210 and His-238 each act as charge relay system in the active site.

The protein belongs to the AB hydrolase superfamily. Methylesterase family.

In terms of biological role, putative methylesterase. The chain is Putative methylesterase 19 from Arabidopsis thaliana (Mouse-ear cress).